A 347-amino-acid chain; its full sequence is Haptoglobin (347 aa).

Residues 1–18 (MRALGAVVTLLLWGQLFA) form the signal peptide. Residues 31-88 (DSCPKPPEIANGYVEHLVRYRCRQFYRLRAEGDGVYTLNDEKQWVNTVAGEKLPECEA) form the Sushi domain. Intrachain disulfides connect C52–C86, C90–C207, C250–C281, and C292–C322. Residues 103-345 (IIGGSMDAKG…LKDWVQETMA (243 aa)) enclose the Peptidase S1 domain. N148, N182, N256, and N264 each carry an N-linked (GlcNAc...) asparagine glycan. Positions 259 to 264 (VPEKKN) are interaction with CD163.

The protein belongs to the peptidase S1 family. In terms of assembly, tetramer of two alpha and two beta chains; disulfide-linked. The hemoglobin/haptoglobin complex is composed of a haptoglobin dimer bound to two hemoglobin alpha-beta dimers. Interacts with CD163. Interacts with ERGIC3. As to expression, expressed by the liver and secreted in plasma.

The protein resides in the secreted. In terms of biological role, as a result of hemolysis, hemoglobin is found to accumulate in the kidney and is secreted in the urine. Haptoglobin captures, and combines with free plasma hemoglobin to allow hepatic recycling of heme iron and to prevent kidney damage. Haptoglobin also acts as an antioxidant, has antibacterial activity and plays a role in modulating many aspects of the acute phase response. Hemoglobin/haptoglobin complexes are rapidly cleared by the macrophage CD163 scavenger receptor expressed on the surface of liver Kupfer cells through an endocytic lysosomal degradation pathway. This is Haptoglobin (Hp) from Mus musculus (Mouse).